Here is a 286-residue protein sequence, read N- to C-terminus: Probable aquaporin-3 (286 aa).

The segment at 1–34 is disordered; it reads MADTYGMNGHNGHVKDRRSSSMNGRNRLYAQQEP. The Cytoplasmic portion of the chain corresponds to 1–52; it reads MADTYGMNGHNGHVKDRRSSSMNGRNRLYAQQEPQRTTHLSEFGKHMVAASG. The helical transmembrane segment at 53 to 73 threads the bilayer; sequence EFVGTFLFLYFGYAGNIVAVL. Topologically, residues 74–87 are extracellular; it reads QEPISGPNGTLANN. N81 and N86 each carry an N-linked (GlcNAc...) asparagine glycan. Residues 88–108 traverse the membrane as a helical segment; the sequence is TVMYIAMAYGFSLLVNVWTFY. The Cytoplasmic portion of the chain corresponds to 109–135; that stretch reads RISGGLFNPAVTFGLCLSGQLPWIRAL. The short motif at 116–118 is the NPA 1 element; the sequence is NPA. The chain crosses the membrane as a helical span at residues 136 to 156; that stretch reads FLFPSQIIAAMCAGGLVNAMF. The Extracellular portion of the chain corresponds to 157 to 175; that stretch reads PGSASIANTTLGPNTSIAQ. N-linked (GlcNAc...) asparagine glycans are attached at residues N164 and N170. The chain crosses the membrane as a helical span at residues 176–196; it reads GVFLEMFFTAQLVFVVLMLAA. The Cytoplasmic portion of the chain corresponds to 197 to 202; it reads EKSRDT. The helical transmembrane segment at 203-223 threads the bilayer; the sequence is FLAPVGIGLALFVALIPGVFV. The Extracellular segment spans residues 224-244; that stretch reads TGGSANPVRSFGCAVGSRDFP. The NPA 2 motif lies at 229 to 231; it reads NPV. Residues 245–265 form a helical membrane-spanning segment; it reads GYHWIYWVGPLLGAALAAGYF. Residues 266 to 286 lie on the Cytoplasmic side of the membrane; sequence RLVKMMHYEEANPGQDSPVDV.

This sequence belongs to the MIP/aquaporin (TC 1.A.8) family.

The protein resides in the membrane. The catalysed reaction is H2O(in) = H2O(out). Its function is as follows. Probable water channel that may have redundant functions with FgAQP5. This chain is Probable aquaporin-3, found in Gibberella zeae (strain ATCC MYA-4620 / CBS 123657 / FGSC 9075 / NRRL 31084 / PH-1) (Wheat head blight fungus).